Consider the following 507-residue polypeptide: Probable cytosol aminopeptidase (507 aa).

Positions 275 and 280 each coordinate Mn(2+). Lys-287 is an active-site residue. Residues Asp-298, Asp-357, and Glu-359 each coordinate Mn(2+). Arg-361 is an active-site residue.

The protein belongs to the peptidase M17 family. It depends on Mn(2+) as a cofactor.

Its subcellular location is the cytoplasm. It carries out the reaction Release of an N-terminal amino acid, Xaa-|-Yaa-, in which Xaa is preferably Leu, but may be other amino acids including Pro although not Arg or Lys, and Yaa may be Pro. Amino acid amides and methyl esters are also readily hydrolyzed, but rates on arylamides are exceedingly low.. It catalyses the reaction Release of an N-terminal amino acid, preferentially leucine, but not glutamic or aspartic acids.. In terms of biological role, presumably involved in the processing and regular turnover of intracellular proteins. Catalyzes the removal of unsubstituted N-terminal amino acids from various peptides. The polypeptide is Probable cytosol aminopeptidase (Acidobacterium capsulatum (strain ATCC 51196 / DSM 11244 / BCRC 80197 / JCM 7670 / NBRC 15755 / NCIMB 13165 / 161)).